The chain runs to 136 residues: Histone H3.1/H3.2 (136 aa).

Positions 1 to 43 (MARTKQTARKSTGGKAPRKQLASKAARKSAPSTGGVKKPHRYK) are disordered. Residue Lys5 is modified to N6,N6,N6-trimethyllysine; alternate. Position 5 is an N6,N6-dimethyllysine; alternate (Lys5). Lys5 and Lys10 each carry N6-methyllysine; alternate. Residue Lys10 is modified to N6-acetyllysine; alternate. Ser11 carries the phosphoserine modification. Lys15 carries the N6,N6-dimethyllysine; alternate modification. N6-acetyllysine; alternate occurs at positions 15, 19, 24, 28, and 37. 4 positions are modified to N6-methyllysine; alternate: Lys19, Lys24, Lys28, and Lys37. N6,N6,N6-trimethyllysine; alternate is present on residues Lys28 and Lys37. Lys28 and Lys37 each carry N6,N6-dimethyllysine; alternate. Residues Lys57 and Lys65 each carry the N6-acetyllysine modification. Lys80 carries the post-translational modification N6,N6,N6-trimethyllysine; alternate. Residue Lys80 is modified to N6,N6-dimethyllysine; alternate. Lys80 carries the post-translational modification N6-methyllysine; alternate.

This sequence belongs to the histone H3 family. In terms of assembly, the nucleosome is a histone octamer containing two molecules each of H2A, H2B, H3 and H4 assembled in one H3-H4 heterotetramer and two H2A-H2B heterodimers. The octamer wraps approximately 147 bp of DNA. In terms of processing, phosphorylated to form H3S10ph. H3S10ph promotes subsequent H3K14ac formation and is required for transcriptional activation through TBP recruitment to the promoters. Mono-, di- and trimethylated by the COMPASS complex to form H3K4me1/2/3. H3K4me activates gene expression by regulating transcription elongation and plays a role in telomere length maintenance. H3K4me enrichment correlates with transcription levels, and occurs in a 5' to 3' gradient with H3K4me3 enrichment at the 5'-end of genes, shifting to H3K4me2 and then H3K4me1. Methylated by SET2 to form H3K36me. H3K36me represses gene expression. Methylated by DOT1 to form H3K79me. H3K79me is required for association of SIR proteins with telomeric regions and for telomeric silencing. The COMPASS-mediated formation of H3K4me2/3 and the DOT1-mediated formation of H3K79me require H2BK123ub1. Post-translationally, acetylation of histone H3 leads to transcriptional activation. H3K14ac formation by GCN5 is promoted by H3S10ph. H3K14ac can also be formed by ESA1. H3K56ac formation occurs predominantly in newly synthesized H3 molecules during G1, S and G2/M of the cell cycle and may be involved in DNA repair.

Its subcellular location is the nucleus. It is found in the chromosome. Functionally, core component of nucleosome. Nucleosomes wrap and compact DNA into chromatin, limiting DNA accessibility to the cellular machineries which require DNA as a template. Histones thereby play a central role in transcription regulation, DNA repair, DNA replication and chromosomal stability. DNA accessibility is regulated via a complex set of post-translational modifications of histones, also called histone code, and nucleosome remodeling. The sequence is that of Histone H3.1/H3.2 (HHT1) from Meyerozyma guilliermondii (strain ATCC 6260 / CBS 566 / DSM 6381 / JCM 1539 / NBRC 10279 / NRRL Y-324) (Yeast).